A 196-amino-acid polypeptide reads, in one-letter code: Peptidyl-tRNA hydrolase (196 aa).

Residue Tyr19 participates in tRNA binding. The active-site Proton acceptor is His24. Residues Tyr68, Asn70, and Asn116 each contribute to the tRNA site.

It belongs to the PTH family. Monomer.

The protein localises to the cytoplasm. It catalyses the reaction an N-acyl-L-alpha-aminoacyl-tRNA + H2O = an N-acyl-L-amino acid + a tRNA + H(+). Hydrolyzes ribosome-free peptidyl-tRNAs (with 1 or more amino acids incorporated), which drop off the ribosome during protein synthesis, or as a result of ribosome stalling. Its function is as follows. Catalyzes the release of premature peptidyl moieties from peptidyl-tRNA molecules trapped in stalled 50S ribosomal subunits, and thus maintains levels of free tRNAs and 50S ribosomes. The sequence is that of Peptidyl-tRNA hydrolase from Aromatoleum aromaticum (strain DSM 19018 / LMG 30748 / EbN1) (Azoarcus sp. (strain EbN1)).